We begin with the raw amino-acid sequence, 1015 residues long: Tolloid-like protein 2 (1015 aa).

A signal peptide spans 1–25 (MPRATALGALVSLLLLLPLPRGAGG). Disordered stretches follow at residues 24-49 (GGLG…EQQL) and 88-130 (VGAT…TTLL). The propeptide occupies 26 to 149 (LGERPDATAD…AKTFSPRVRR (124 aa)). The segment covering 103–113 (SESSPDTTAMD) has biased composition (polar residues). Basic and acidic residues predominate over residues 115-125 (GTKEAGKDGRE). A Peptidase M12A domain is found at 149–349 (RATTSRTERI…AQARKLYKCP (201 aa)). Residue Asn-171 is glycosylated (N-linked (GlcNAc...) asparagine). Intrachain disulfides connect Cys-192–Cys-348, Cys-212–Cys-234, Cys-214–Cys-215, and Cys-351–Cys-377. His-242 serves as a coordination point for Zn(2+). Glu-243 is a catalytic residue. Zn(2+) is bound by residues His-246 and His-252. CUB domains are found at residues 351 to 463 (CGET…YEAT) and 464 to 576 (CGGD…FFKE). Residues Asn-361 and Asn-392 are each glycosylated (N-linked (GlcNAc...) asparagine). Intrachain disulfides connect Cys-404–Cys-426, Cys-464–Cys-490, Cys-517–Cys-539, Cys-580–Cys-592, Cys-588–Cys-601, Cys-603–Cys-616, Cys-620–Cys-646, Cys-673–Cys-695, Cys-736–Cys-747, Cys-743–Cys-756, Cys-758–Cys-771, and Cys-776–Cys-802. One can recognise an EGF-like 1; calcium-binding domain in the interval 576–617 (EVDECSWPDHGGCEHRCVNTLGSYKCACDPGYELAADKKMCE). A CUB 3 domain is found at 620–732 (CGGFITKLNG…RGFRAHFFSD (113 aa)). N-linked (GlcNAc...) asparagine glycosylation is present at Asn-628. The EGF-like 2; calcium-binding domain maps to 732 to 772 (DKDECAKDNGGCQHECVNTFGSYLCRCRNGYWLHENGHDCK). CUB domains lie at 776-888 (CAHK…HSTE) and 889-1005 (CGGR…YTST). Asn-805 carries an N-linked (GlcNAc...) asparagine glycan. Intrachain disulfides connect Cys-829–Cys-851, Cys-889–Cys-919, and Cys-946–Cys-968. Omega-N-methylarginine is present on residues Arg-963 and Arg-966.

The cofactor is Zn(2+).

It localises to the secreted. Functionally, protease which specifically processes pro-lysyl oxidase. Required for the embryonic development. Predominant protease, which in the development, influences dorsal-ventral patterning and skeletogenesis. This Homo sapiens (Human) protein is Tolloid-like protein 2 (TLL2).